A 262-amino-acid chain; its full sequence is Putative BTB/POZ domain-containing protein L834 (262 aa).

Positions 16–86 (FDVVVELTDE…FYKKNIQPCI (71 aa)) constitute a BTB domain.

This sequence belongs to the mimivirus BTB/WD family.

The protein is Putative BTB/POZ domain-containing protein L834 of Acanthamoeba polyphaga (Amoeba).